The chain runs to 151 residues: Large-conductance mechanosensitive channel (151 aa).

2 helical membrane-spanning segments follow: residues G12–T32 and V71–V91. The disordered stretch occupies residues A122–Q151.

The protein belongs to the MscL family. In terms of assembly, homopentamer.

It localises to the cell membrane. In terms of biological role, channel that opens in response to stretch forces in the membrane lipid bilayer. May participate in the regulation of osmotic pressure changes within the cell. The chain is Large-conductance mechanosensitive channel from Mycobacterium tuberculosis (strain CDC 1551 / Oshkosh).